The following is an 84-amino-acid chain: Small ribosomal subunit protein bS16 (84 aa).

Belongs to the bacterial ribosomal protein bS16 family.

The protein is Small ribosomal subunit protein bS16 of Cupriavidus pinatubonensis (strain JMP 134 / LMG 1197) (Cupriavidus necator (strain JMP 134)).